The sequence spans 186 residues: Ribosome-recycling factor (186 aa).

The protein belongs to the RRF family.

It localises to the cytoplasm. Its function is as follows. Responsible for the release of ribosomes from messenger RNA at the termination of protein biosynthesis. May increase the efficiency of translation by recycling ribosomes from one round of translation to another. The polypeptide is Ribosome-recycling factor (Bacteroides thetaiotaomicron (strain ATCC 29148 / DSM 2079 / JCM 5827 / CCUG 10774 / NCTC 10582 / VPI-5482 / E50)).